The following is a 410-amino-acid chain: 45 kDa immediate-early protein 2 (410 aa).

The disordered stretch occupies residues 36–166; it reads SEEEQGEEVE…SKRISELDNE (131 aa). Composition is skewed to low complexity over residues 47 to 67, 90 to 101, and 132 to 147; these read RGATASSPSTGSGTPRVTSPT, SSSSSSCSSASD, and AASSSLLSCGHQSSGG. A zinc finger lies at 257 to 283; the sequence is VRCRLGTMCNLALSTPFLMEHTMPVTH.

In terms of biological role, activates the E1.7 promoter. This activation is augmented by the IE1 protein. It down-regulates the transcription of genes under the control of the major IE promoter. The sequence is that of 45 kDa immediate-early protein 2 (UL122) from Homo sapiens (Human).